The sequence spans 205 residues: Small ribosomal subunit protein uS4 (205 aa).

Positions 27-46 are disordered; the sequence is LNKRDYAPGQHGQRRKGKPS. The region spanning 118–178 is the S4 RNA-binding domain; that stretch reads HGHVLVNGKR…HVDHRLMKGT (61 aa).

The protein belongs to the universal ribosomal protein uS4 family. In terms of assembly, part of the 30S ribosomal subunit. Contacts protein S5. The interaction surface between S4 and S5 is involved in control of translational fidelity.

One of the primary rRNA binding proteins, it binds directly to 16S rRNA where it nucleates assembly of the body of the 30S subunit. Functionally, with S5 and S12 plays an important role in translational accuracy. The polypeptide is Small ribosomal subunit protein uS4 (Granulibacter bethesdensis (strain ATCC BAA-1260 / CGDNIH1)).